We begin with the raw amino-acid sequence, 396 residues long: Alanine racemase (396 aa).

The active-site Proton acceptor; specific for D-alanine is K46. An N6-(pyridoxal phosphate)lysine modification is found at K46. R145 contributes to the substrate binding site. Y280 functions as the Proton acceptor; specific for L-alanine in the catalytic mechanism. A substrate-binding site is contributed by M328.

It belongs to the alanine racemase family. It depends on pyridoxal 5'-phosphate as a cofactor.

The catalysed reaction is L-alanine = D-alanine. Its pathway is amino-acid biosynthesis; D-alanine biosynthesis; D-alanine from L-alanine: step 1/1. In terms of biological role, catalyzes the interconversion of L-alanine and D-alanine. May also act on other amino acids. In Brucella canis (strain ATCC 23365 / NCTC 10854 / RM-666), this protein is Alanine racemase (alr).